A 449-amino-acid chain; its full sequence is 23S rRNA (uracil(1939)-C(5))-methyltransferase RlmD (449 aa).

The region spanning 1 to 66 (MGRSRHHNKL…AKFDEAKVVE (66 aa)) is the TRAM domain. Positions 79, 85, 88, and 169 each coordinate [4Fe-4S] cluster. Gln-280, Phe-309, Asn-314, Glu-330, Asn-357, and Asp-379 together coordinate S-adenosyl-L-methionine. Cys-405 serves as the catalytic Nucleophile.

It belongs to the class I-like SAM-binding methyltransferase superfamily. RNA M5U methyltransferase family. RlmD subfamily.

The enzyme catalyses uridine(1939) in 23S rRNA + S-adenosyl-L-methionine = 5-methyluridine(1939) in 23S rRNA + S-adenosyl-L-homocysteine + H(+). Catalyzes the formation of 5-methyl-uridine at position 1939 (m5U1939) in 23S rRNA. The sequence is that of 23S rRNA (uracil(1939)-C(5))-methyltransferase RlmD from Francisella tularensis subsp. novicida (strain U112).